The chain runs to 85 residues: Small ribosomal subunit protein uS17 (85 aa).

This sequence belongs to the universal ribosomal protein uS17 family. Part of the 30S ribosomal subunit.

Its function is as follows. One of the primary rRNA binding proteins, it binds specifically to the 5'-end of 16S ribosomal RNA. This Lachnospira eligens (strain ATCC 27750 / DSM 3376 / VPI C15-48 / C15-B4) (Eubacterium eligens) protein is Small ribosomal subunit protein uS17.